Reading from the N-terminus, the 360-residue chain is Peptide chain release factor 1 (360 aa).

At glutamine 236 the chain carries N5-methylglutamine. The interval 288-308 is disordered; the sequence is QDEQDAERKSTIGTGDRSERI. Residues 293–308 are compositionally biased toward basic and acidic residues; the sequence is AERKSTIGTGDRSERI.

It belongs to the prokaryotic/mitochondrial release factor family. In terms of processing, methylated by PrmC. Methylation increases the termination efficiency of RF1.

The protein localises to the cytoplasm. In terms of biological role, peptide chain release factor 1 directs the termination of translation in response to the peptide chain termination codons UAG and UAA. The sequence is that of Peptide chain release factor 1 from Streptococcus equi subsp. equi (strain 4047).